The following is a 255-amino-acid chain: 14-3-3 protein 5 (255 aa).

The protein belongs to the 14-3-3 family. In terms of assembly, homodimer.

In Solanum lycopersicum (Tomato), this protein is 14-3-3 protein 5 (TFT5).